A 120-amino-acid chain; its full sequence is MSTQRPRHSGIRAVGPYAWAGRCGRIGRWGVHQEAMMNLAIWHPRKVQSATIYQVTDRSHDGRTARVPGDEITSTVSGWLSELGTQSPLADELARAVRIGDWPAAYAIGEHLSVEIAVAV.

This is an uncharacterized protein from Mycobacterium tuberculosis (strain CDC 1551 / Oshkosh).